Here is a 319-residue protein sequence, read N- to C-terminus: Ribonucleoside-diphosphate reductase 2 subunit beta (319 aa).

Asp-67, Glu-98, and His-101 together coordinate Fe cation. The active site involves Tyr-105. 3 residues coordinate Fe cation: Glu-158, Glu-192, and His-195.

Belongs to the ribonucleoside diphosphate reductase small chain family. In terms of assembly, tetramer of two alpha and two beta subunits. Fe cation serves as cofactor.

The enzyme catalyses a 2'-deoxyribonucleoside 5'-diphosphate + [thioredoxin]-disulfide + H2O = a ribonucleoside 5'-diphosphate + [thioredoxin]-dithiol. In terms of biological role, provides the precursors necessary for DNA synthesis. Catalyzes the biosynthesis of deoxyribonucleotides from the corresponding ribonucleotides. R2F contains the tyrosyl radical required for catalysis. The chain is Ribonucleoside-diphosphate reductase 2 subunit beta (nrdF) from Escherichia coli (strain K12).